Consider the following 907-residue polypeptide: Nuclear receptor coactivator 7 (907 aa).

Residues 1-12 (METKEEKKERRQ) show a composition bias toward basic and acidic residues. Residues 1-29 (METKEEKKERRQGYFARLKKKRQAKQNTE) are a coiled coil. 3 disordered regions span residues 1–51 (METK…DDES), 63–83 (DNCK…RKKK), and 99–121 (YSTD…SQKP). The segment covering 25-41 (KQNTETVSANSPGSPVS) has biased composition (polar residues). 2 stretches are compositionally biased toward basic and acidic residues: residues 68 to 78 (AGEKETVPEKE) and 99 to 116 (YSTD…EKKM). One can recognise a LysM domain in the interval 125–168 (IEYTAGNQDTINSIALKFNITPNKLVELNKLFTHTIVPGQILFV). Disordered regions lie at residues 335–373 (LSKE…QSSE) and 401–443 (DPHV…MDRG). The span at 401 to 422 (DPHVKEPSEEKNVSDIRTKEDS) shows a compositional bias: basic and acidic residues. Positions 746-907 (ALLENMHIEQ…IQDVEVWTFE (162 aa)) constitute a TLDc domain.

Belongs to the OXR1 family.

Its subcellular location is the nucleus. Its function is as follows. Enhances the transcriptional activities of several nuclear receptors. The chain is Nuclear receptor coactivator 7 (NCOA7) from Gallus gallus (Chicken).